The sequence spans 222 residues: Extracellular protein ARB_03106 (222 aa).

The N-terminal stretch at 1–18 (MRLHSVLAVATAVGCAVA) is a signal peptide. N-linked (GlcNAc...) asparagine glycosylation is found at Asn113 and Asn126.

It is found in the secreted. The protein is Extracellular protein ARB_03106 of Arthroderma benhamiae (strain ATCC MYA-4681 / CBS 112371) (Trichophyton mentagrophytes).